Consider the following 582-residue polypeptide: Potassium-transporting ATPase potassium-binding subunit (582 aa).

The next 10 membrane-spanning stretches (helical) occupy residues alanine 11–valine 31, leucine 81–phenylalanine 101, phenylalanine 148–phenylalanine 168, leucine 195–isoleucine 215, valine 272–valine 292, glycine 298–valine 318, alanine 379–glycine 399, glycine 401–glycine 421, valine 439–valine 459, and glycine 551–phenylalanine 571.

Belongs to the KdpA family. In terms of assembly, the system is composed of three essential subunits: KdpA, KdpB and KdpC.

It is found in the cell membrane. Part of the high-affinity ATP-driven potassium transport (or Kdp) system, which catalyzes the hydrolysis of ATP coupled with the electrogenic transport of potassium into the cytoplasm. This subunit binds the extracellular potassium ions and delivers the ions to the membrane domain of KdpB through an intramembrane tunnel. The sequence is that of Potassium-transporting ATPase potassium-binding subunit from Halobacterium salinarum (strain ATCC 700922 / JCM 11081 / NRC-1) (Halobacterium halobium).